We begin with the raw amino-acid sequence, 210 residues long: Oxygen-insensitive NADPH nitroreductase (210 aa).

150–155 (GVSLMG) is a binding site for NADP(+).

The protein belongs to the nitroreductase family.

Functionally, reduction of a variety of nitroaromatic compounds using NADPH as source of reducing equivalents; two electrons are transferred. This is Oxygen-insensitive NADPH nitroreductase (rdxA) from Helicobacter pylori (strain J99 / ATCC 700824) (Campylobacter pylori J99).